The primary structure comprises 309 residues: Glutaminase (309 aa).

Substrate is bound by residues S65, N117, E162, N169, Y193, Y245, and V263.

This sequence belongs to the glutaminase family. Homotetramer.

It carries out the reaction L-glutamine + H2O = L-glutamate + NH4(+). This is Glutaminase from Bacillus mycoides (strain KBAB4) (Bacillus weihenstephanensis).